Consider the following 344-residue polypeptide: Fibronectin type 3 and ankyrin repeat domains 1 protein (344 aa).

In terms of domain architecture, Fibronectin type-III spans 11–108; that stretch reads KPHPPVVGKV…VVSVATTREP (98 aa). ANK repeat units follow at residues 109-139, 143-172, 176-205, 209-238, 243-273, and 277-306; these read ISSE…MIDV, FGFT…DVNL, SGKD…SWEA, GGCT…EVDV, SGWT…DVNI, and DGKT…DATV.

Interacts with COPS5; regulates the phosphorylation of JUN and the transcriptional activity of AP-1. Interacts with RYBP; may prevent the ubiquitin-mediated proteasomal degradation of FANK1. Post-translationally, polyubiquitinated. Polyubiquitination leads to proteasomal degradation. In terms of tissue distribution, mostly restricted to testis (at protein level), including mid to late pachytene spermatocytes (stages VI-X), diplotene spermatocytes (stage XI), meiotically dividing spermatocytes (stage XII) and spermatids in steps 1-14. Highest levels in late pachytene spermatocytes and spermatids in steps 1-9.

The protein resides in the nucleus. The protein localises to the cytoplasm. It localises to the cytosol. Its subcellular location is the cytoskeleton. It is found in the cilium basal body. The protein resides in the cell projection. The protein localises to the cilium. Through the activation of JUN and AP-1-mediated transcription, may regulate apoptosis. This chain is Fibronectin type 3 and ankyrin repeat domains 1 protein, found in Mus musculus (Mouse).